The sequence spans 1503 residues: ATP-binding cassette sub-family C member 6 (1503 aa).

Residues 1-31 are Extracellular-facing; the sequence is MAAPAEPCAGQGVWNQTEPEPAATSLLSLCF. N-linked (GlcNAc...) asparagine glycosylation is present at N15. A helical transmembrane segment spans residues 32 to 52; it reads LRTAGVWVPPMYLWVLGPIYL. At 53–72 the chain is on the cytoplasmic side; it reads LFIHHHGRGYLRMSPLFKAK. The chain crosses the membrane as a helical span at residues 73-93; that stretch reads MVLGFALIVLCTSSVAVALWK. Residues 94–98 are Extracellular-facing; the sequence is IQQGT. The helical transmembrane segment at 99–119 threads the bilayer; that stretch reads PEAPEFLIHPTVWLTTMSFAV. The Cytoplasmic portion of the chain corresponds to 120–131; it reads FLIHTERKKGVQ. A helical membrane pass occupies residues 132–149; it reads SSGVLFGYWLLCFVLPAT. Residues 150 to 167 lie on the Extracellular side of the membrane; the sequence is NAAQQASGAGFQSDPVRH. A helical membrane pass occupies residues 168–188; that stretch reads LSTYLCLSLVVAQFVLSCLAD. Topologically, residues 189–302 are cytoplasmic; it reads QPPFFPEDPQ…GSQWRPLLKA (114 aa). The chain crosses the membrane as a helical span at residues 303 to 323; it reads IWQVFHSTFLLGTLSLIISDV. Positions 311–593 constitute an ABC transmembrane type-1 1 domain; sequence FLLGTLSLII…LPFSIHSLVQ (283 aa). Residues 324–349 lie on the Extracellular side of the membrane; sequence FRFTVPKLLSLFLEFIGDPKPPAWKG. The helical transmembrane segment at 350–370 threads the bilayer; it reads YLLAVLMFLSACLQTLFEQQN. Residues 371–426 are Cytoplasmic-facing; sequence MYRLKVLQMRLRSAITGLVYRKVLALSSGSRKASAVGDVVNLVSVDVQRLTESVLY. The chain crosses the membrane as a helical span at residues 427–447; sequence LNGLWLPLVWIVVCFVYLWQL. Residues 448–450 lie on the Extracellular side of the membrane; sequence LGP. The chain crosses the membrane as a helical span at residues 451–471; sequence SALTAIAVFLSLLPLNFFISK. At 472-533 the chain is on the cytoplasmic side; sequence KRNHHQEEQM…ALRTSGLLFS (62 aa). Residues 534–554 form a helical membrane-spanning segment; that stretch reads VSLVSFQVSTFLVALVVFAVH. The Extracellular segment spans residues 555 to 575; that stretch reads TLVAENAMNAEKAFVTLTVLN. A helical membrane pass occupies residues 576-596; sequence ILNKAQAFLPFSIHSLVQARV. The Cytoplasmic segment spans residues 597–939; that stretch reads SFDRLVTFLC…VKATVHLAYL (343 aa). The ABC transporter 1 domain maps to 629 to 853; that stretch reads ITIHSATFAW…KGALMCLLDQ (225 aa). ATP is bound at residue 663–670; sequence GPVGAGKS. A disordered region spans residues 854-919; the sequence is ARQPGDRGEG…LDDPDRAGWP (66 aa). Residues 881 to 901 are compositionally biased toward basic and acidic residues; the sequence is RRPELRRERSIKSVPEKDRTT. The helical transmembrane segment at 940 to 960 threads the bilayer; that stretch reads RAVGTPLCLYALFLFLCQQVA. The ABC transmembrane type-1 2 domain occupies 947–1228; sequence CLYALFLFLC…VVRNWTDLEN (282 aa). Topologically, residues 961–997 are extracellular; that stretch reads SFCRGYWLSLWADDPAVGGQQTQAALRGGIFGLLGCL. A helical transmembrane segment spans residues 998–1018; that stretch reads QAIGLFASMAAVLLGGARASR. Residues 1019–1061 are Cytoplasmic-facing; it reads LLFQRLLWDVVRSPISFFERTPIGHLLNRFSKETDTVDVDIPD. The chain crosses the membrane as a helical span at residues 1062 to 1082; it reads KLRSLLMYAFGLLEVSLVVAV. A1083 is a topological domain (extracellular). Residues 1084–1104 form a helical membrane-spanning segment; it reads TPLATVAILPLFLLYAGFQSL. Over 1105–1175 the chain is Cytoplasmic; the sequence is YVVSSCQLRR…VADRWLAANV (71 aa). The chain crosses the membrane as a helical span at residues 1176 to 1196; that stretch reads ELLGNGLVFAAATCAVLSKAH. At 1197-1198 the chain is on the extracellular side; the sequence is LS. The helical transmembrane segment at 1199–1219 threads the bilayer; sequence AGLVGFSVSAALQVTQTLQWV. At 1220–1503 the chain is on the cytoplasmic side; sequence VRNWTDLENS…YRLAQESGLV (284 aa). In terms of domain architecture, ABC transporter 2 spans 1265-1499; that stretch reads IEFRDFGLRY…KGLFYRLAQE (235 aa). S1286 carries the post-translational modification Phosphoserine. An ATP-binding site is contributed by 1299–1306; that stretch reads GRTGAGKS.

This sequence belongs to the ABC transporter superfamily. ABCC family. Conjugate transporter (TC 3.A.1.208) subfamily. Mg(2+) is required as a cofactor. Post-translationally, glycosylated. Expressed in kidney and liver. Very low expression in other tissues. In testis, localized to peritubular myoid cells, Leydig cells, along the basal membrane of Sertoli cells and moderately in the adluminal compartment of the seminiferous tubules.

The protein resides in the basal cell membrane. Its subcellular location is the basolateral cell membrane. It localises to the endoplasmic reticulum membrane. The catalysed reaction is an S-substituted glutathione(in) + ATP + H2O = an S-substituted glutathione(out) + ADP + phosphate + H(+). The enzyme catalyses leukotriene C4(in) + ATP + H2O = leukotriene C4(out) + ADP + phosphate + H(+). With respect to regulation, LTC4 transport is completely inhibited by 1 mM orthovanadate. ATP-dependent transporter of the ATP-binding cassette (ABC) family that actively extrudes physiological compounds, and xenobiotics from cells. Mediates ATP-dependent transport of glutathione conjugates such as leukotriene-c4 (LTC4) and N-ethylmaleimide S-glutathione (NEM-GS) (in vitro), and an anionic cyclopentapeptide endothelin antagonist, BQ-123. May contribute to regulate the transport of organic compounds in testes across the blood-testis-barrier. Does not appear to actively transport drugs outside the cell. Confers low levels of cellular resistance to etoposide, teniposide, anthracyclines and cisplatin. In terms of biological role, mediates the release of nucleoside triphosphates, predominantly ATP, into the circulation, where it is rapidly converted into AMP and the mineralization inhibitor inorganic pyrophosphate (PPi) by the ecto-enzyme ectonucleotide pyrophosphatase phosphodiesterase 1 (ENPP1), therefore playing a role in PPi homeostasis. Functionally, inhibits TNF-alpha-mediated apoptosis through blocking one or more caspases. This chain is ATP-binding cassette sub-family C member 6 (ABCC6), found in Homo sapiens (Human).